Consider the following 203-residue polypeptide: Pyrrolidone-carboxylate peptidase (203 aa).

Active-site residues include glutamate 78, cysteine 141, and histidine 165.

Belongs to the peptidase C15 family. Homotetramer.

The protein resides in the cytoplasm. It catalyses the reaction Release of an N-terminal pyroglutamyl group from a polypeptide, the second amino acid generally not being Pro.. Removes 5-oxoproline from various penultimate amino acid residues except L-proline. This is Pyrrolidone-carboxylate peptidase from Thermoanaerobacter pseudethanolicus (strain ATCC 33223 / 39E) (Clostridium thermohydrosulfuricum).